Consider the following 123-residue polypeptide: Large ribosomal subunit protein bL19 (123 aa).

It belongs to the bacterial ribosomal protein bL19 family.

In terms of biological role, this protein is located at the 30S-50S ribosomal subunit interface and may play a role in the structure and function of the aminoacyl-tRNA binding site. The protein is Large ribosomal subunit protein bL19 of Ruegeria sp. (strain TM1040) (Silicibacter sp.).